We begin with the raw amino-acid sequence, 134 residues long: Submaxillary gland androgen-regulated protein 3A (134 aa).

Residues 1–22 form the signal peptide; the sequence is MKSLTWILGLWALAACFTPGES. The interval 19-134 is disordered; it reads PGESQRGPRG…TDPALPTPAP (116 aa). Pro residues-rich tracts occupy residues 28-43, 50-85, and 94-119; these read GPYPPGPLAPPPPPCF, VPPPHPPPYGPGRFPPPLSPPYGPGRIPPSPPPPYG, and LPPPYGPGYPQPPSQPRPYPPGPPFF.

It belongs to the PROL1/PROL3 family.

The protein resides in the secreted. Its function is as follows. May play a role in protection or detoxification. The sequence is that of Submaxillary gland androgen-regulated protein 3A (SMR3A) from Homo sapiens (Human).